We begin with the raw amino-acid sequence, 557 residues long: Probable protein kinase UbiB (557 aa).

Residues 121 to 509 (SFDTVPLASA…RKLQTRVVTA (389 aa)) form the Protein kinase domain. ATP contacts are provided by residues 127–135 (LASASIAQV) and Lys154. Asp289 functions as the Proton acceptor in the catalytic mechanism. Helical transmembrane passes span 506–526 (VVTA…YGLH) and 535–555 (VPVW…VAWL).

Belongs to the ABC1 family. UbiB subfamily.

It localises to the cell inner membrane. The protein operates within cofactor biosynthesis; ubiquinone biosynthesis [regulation]. In terms of biological role, is probably a protein kinase regulator of UbiI activity which is involved in aerobic coenzyme Q (ubiquinone) biosynthesis. The protein is Probable protein kinase UbiB of Xanthomonas euvesicatoria pv. vesicatoria (strain 85-10) (Xanthomonas campestris pv. vesicatoria).